A 305-amino-acid chain; its full sequence is Homoserine O-succinyltransferase (305 aa).

C142 (acyl-thioester intermediate) is an active-site residue. Substrate contacts are provided by K163 and S192. Catalysis depends on H235, which acts as the Proton acceptor. The active site involves E237. R249 is a substrate binding site.

This sequence belongs to the MetA family.

Its subcellular location is the cytoplasm. It carries out the reaction L-homoserine + succinyl-CoA = O-succinyl-L-homoserine + CoA. The protein operates within amino-acid biosynthesis; L-methionine biosynthesis via de novo pathway; O-succinyl-L-homoserine from L-homoserine: step 1/1. In terms of biological role, transfers a succinyl group from succinyl-CoA to L-homoserine, forming succinyl-L-homoserine. This is Homoserine O-succinyltransferase from Psychromonas ingrahamii (strain DSM 17664 / CCUG 51855 / 37).